A 308-amino-acid polypeptide reads, in one-letter code: MTSKLEQLKQFTTVVADTGDFEAIARVKPVDATTNPSLLLKAAAIPAYAELLNASVRDCKGDVGLASDRFGVAVGQEILKVIPGRISTEVDARLSFDQDAVLKRAHRLIELYDKAGVGRDRVLIKIASTWEGIRAAEILEKEGIQTNLTLLFSFAQAAACADAGVFLISPFVGRIYDWYKKANGNDYTGADDPGVQSVTRIYNYYKANDYKTVVMGASFRNLSQIEQLAGCDRLTISPDLIEKLAADTGKLERKLAPGHAGEARLSLNEAQFRWLSNEDAMATEKLAEGIRQFARDQEKLEALLQAKL.

The active-site Schiff-base intermediate with substrate is the Lys-125.

The protein belongs to the transaldolase family. Type 1 subfamily. As to quaternary structure, homodimer.

It is found in the cytoplasm. It catalyses the reaction D-sedoheptulose 7-phosphate + D-glyceraldehyde 3-phosphate = D-erythrose 4-phosphate + beta-D-fructose 6-phosphate. It functions in the pathway carbohydrate degradation; pentose phosphate pathway; D-glyceraldehyde 3-phosphate and beta-D-fructose 6-phosphate from D-ribose 5-phosphate and D-xylulose 5-phosphate (non-oxidative stage): step 2/3. In terms of biological role, transaldolase is important for the balance of metabolites in the pentose-phosphate pathway. This chain is Transaldolase, found in Pseudomonas fluorescens (strain Pf0-1).